Consider the following 305-residue polypeptide: MANSRILNDTAIDGQIEETTAWKDFLSLIKIGIVNSNLITTFTGMWLALHISGLSFLGNINTVLLTLIGSSLIIAGSCAINNWYDRDIDHLMERTKVRPTVTGKIQPSQALWSGILLVALGLIMLLMTTVMAAVIGFIGVFTYVVLYTMWTKRRYTINTVVGSVSGAVPPLIGWTAVEGNIGVVAWVLFMILFIWQIPHFLALAIKKTEDYRAANIPMLPVVYGFEVTKRQIIVWVACLMPLPFFLGSLGLPIVILGLLLNIGWLILGLMGFRSKNIMKWATQMFVYSLNYMTIYFVAMVVLTLF.

8 helical membrane passes run 38-58 (LITTFTGMWLALHISGLSFLG), 60-80 (INTVLLTLIGSSLIIAGSCAI), 115-135 (ILLVALGLIMLLMTTVMAAVI), 157-177 (INTVVGSVSGAVPPLIGWTAV), 181-201 (IGVVAWVLFMILFIWQIPHFL), 227-247 (VTKRQIIVWVACLMPLPFFLG), 249-269 (LGLPIVILGLLLNIGWLILGL), and 285-305 (FVYSLNYMTIYFVAMVVLTLF).

This sequence belongs to the UbiA prenyltransferase family. Protoheme IX farnesyltransferase subfamily. As to quaternary structure, interacts with CtaA.

The protein localises to the cell membrane. The catalysed reaction is heme b + (2E,6E)-farnesyl diphosphate + H2O = Fe(II)-heme o + diphosphate. The protein operates within porphyrin-containing compound metabolism; heme O biosynthesis; heme O from protoheme: step 1/1. In terms of biological role, converts heme B (protoheme IX) to heme O by substitution of the vinyl group on carbon 2 of heme B porphyrin ring with a hydroxyethyl farnesyl side group. This is Protoheme IX farnesyltransferase 2 (ctaB2) from Bacillus subtilis (strain 168).